A 114-amino-acid chain; its full sequence is Fluoride-specific ion channel FluC 1 (114 aa).

3 helical membrane passes run 28 to 48, 56 to 76, and 91 to 111; these read VFPW…GFLH, ILLL…TFQV, and IIYL…GSWL. Na(+) is bound by residues glycine 66 and threonine 69.

The protein belongs to the fluoride channel Fluc/FEX (TC 1.A.43) family.

It is found in the cell membrane. It carries out the reaction fluoride(in) = fluoride(out). Its activity is regulated as follows. Na(+) is not transported, but it plays an essential structural role and its presence is essential for fluoride channel function. Functionally, fluoride-specific ion channel. Important for reducing fluoride concentration in the cell, thus reducing its toxicity. This chain is Fluoride-specific ion channel FluC 1, found in Ligilactobacillus salivarius (strain UCC118) (Lactobacillus salivarius).